The primary structure comprises 453 residues: Carbamoyl phosphate synthase arginine-specific small chain (453 aa).

The N-terminal 28 residues, 1–28 (MFARVFKAMPARAPAFTSVNASIQSRFM), are a transit peptide targeting the mitochondrion. One can recognise a Glutamine amidotransferase type-1 domain in the interval 219–406 (HVAVIDCGVK…LDSVVKYKNH (188 aa)). Cys295 serves as the catalytic Nucleophile. Residues His379 and Glu381 contribute to the active site.

It belongs to the CarA family. In terms of assembly, heterodimer composed of 2 chains; the small (or glutamine) chain promotes the hydrolysis of glutamine to ammonia, which is used by the large (or ammonia) chain to synthesize carbamoyl phosphate.

It is found in the mitochondrion matrix. The enzyme catalyses hydrogencarbonate + L-glutamine + 2 ATP + H2O = carbamoyl phosphate + L-glutamate + 2 ADP + phosphate + 2 H(+). It carries out the reaction L-glutamine + H2O = L-glutamate + NH4(+). Its pathway is amino-acid biosynthesis; L-arginine biosynthesis; carbamoyl phosphate from bicarbonate: step 1/1. Its function is as follows. Small subunit of the arginine-specific carbamoyl phosphate synthase (CPSase). CPSase catalyzes the formation of carbamoyl phosphate from the ammonia moiety of glutamine, carbonate, and phosphate donated by ATP, the first step of the arginine biosynthetic pathway. The small subunit (glutamine amidotransferase) binds and cleaves glutamine to supply the large subunit with the substrate ammonia. The polypeptide is Carbamoyl phosphate synthase arginine-specific small chain (cpa1) (Aspergillus niger (strain ATCC MYA-4892 / CBS 513.88 / FGSC A1513)).